We begin with the raw amino-acid sequence, 117 residues long: Ribonuclease P protein component (117 aa).

The protein belongs to the RnpA family. As to quaternary structure, consists of a catalytic RNA component (M1 or rnpB) and a protein subunit.

It catalyses the reaction Endonucleolytic cleavage of RNA, removing 5'-extranucleotides from tRNA precursor.. RNaseP catalyzes the removal of the 5'-leader sequence from pre-tRNA to produce the mature 5'-terminus. It can also cleave other RNA substrates such as 4.5S RNA. The protein component plays an auxiliary but essential role in vivo by binding to the 5'-leader sequence and broadening the substrate specificity of the ribozyme. In Thermotoga maritima (strain ATCC 43589 / DSM 3109 / JCM 10099 / NBRC 100826 / MSB8), this protein is Ribonuclease P protein component.